We begin with the raw amino-acid sequence, 639 residues long: Zinc finger protein ZIC 5 (639 aa).

4 disordered regions span residues 113 to 171 (PCGG…GHSR), 189 to 251 (HGAP…GHPH), 323 to 355 (PGPH…HLPG), and 379 to 409 (PDEL…PCSK). Pro residues predominate over residues 124-150 (SAPPPPAPPLPPTPSPPPPPPPPPPPA). Composition is skewed to pro residues over residues 331 to 343 (APPP…PAPA) and 385 to 401 (LPPP…PPPA). The segment at 434 to 461 (HVCFWEDCPREGKPFKAKYKLINHIRVH) adopts a C2H2-type 1; atypical zinc-finger fold. C2H2-type zinc fingers lie at residues 467–491 (FPCP…KRTH), 497–521 (FKCE…SHVH), and 527–551 (YYCK…MKIH). Residues 548 to 568 (MKIHCKSPPPSPGPLGYSSVG) form a disordered region. Phosphoserine is present on residues Ser-554, Ser-558, and Ser-576. The disordered stretch occupies residues 607-639 (APSHLHTPSSNGTTSETEDEEIYGNPEVVRTIH). The span at 612-621 (HTPSSNGTTS) shows a compositional bias: polar residues.

It belongs to the GLI C2H2-type zinc-finger protein family.

Its subcellular location is the nucleus. Functionally, essential for neural crest development, converting cells from an epidermal fate to a neural crest cell fate. Binds to DNA. The sequence is that of Zinc finger protein ZIC 5 (ZIC5) from Homo sapiens (Human).